The sequence spans 167 residues: Lipoprotein signal peptidase (167 aa).

A run of 2 helical transmembrane segments spans residues 67–87 and 91–111; these read WILV…LWRA and LVAL…IDRI. Catalysis depends on residues D118 and D136. A helical membrane pass occupies residues 127–147; the sequence is FSWYVFNLADAAIVAGVALLI.

It belongs to the peptidase A8 family.

It localises to the cell inner membrane. It catalyses the reaction Release of signal peptides from bacterial membrane prolipoproteins. Hydrolyzes -Xaa-Yaa-Zaa-|-(S,diacylglyceryl)Cys-, in which Xaa is hydrophobic (preferably Leu), and Yaa (Ala or Ser) and Zaa (Gly or Ala) have small, neutral side chains.. Its pathway is protein modification; lipoprotein biosynthesis (signal peptide cleavage). In terms of biological role, this protein specifically catalyzes the removal of signal peptides from prolipoproteins. The chain is Lipoprotein signal peptidase from Beijerinckia indica subsp. indica (strain ATCC 9039 / DSM 1715 / NCIMB 8712).